Consider the following 440-residue polypeptide: D-serine dehydratase (440 aa).

K116 carries the post-translational modification N6-(pyridoxal phosphate)lysine.

This sequence belongs to the serine/threonine dehydratase family. DsdA subfamily. In terms of assembly, monomer. It depends on pyridoxal 5'-phosphate as a cofactor.

It catalyses the reaction D-serine = pyruvate + NH4(+). The sequence is that of D-serine dehydratase from Salmonella enteritidis PT4 (strain P125109).